Consider the following 213-residue polypeptide: StAR-related lipid transfer protein 5 (213 aa).

An START domain is found at M1–G213.

In terms of biological role, may be involved in the intracellular transport of sterols or other lipids. May bind cholesterol or other sterols. The protein is StAR-related lipid transfer protein 5 (STARD5) of Bos taurus (Bovine).